The sequence spans 88 residues: Small ribosomal subunit protein bS18B (88 aa).

It belongs to the bacterial ribosomal protein bS18 family. As to quaternary structure, part of the 30S ribosomal subunit. Forms a tight heterodimer with protein bS6.

Binds as a heterodimer with protein bS6 to the central domain of the 16S rRNA, where it helps stabilize the platform of the 30S subunit. This Mycobacterium bovis (strain ATCC BAA-935 / AF2122/97) protein is Small ribosomal subunit protein bS18B (rpsR2).